Consider the following 230-residue polypeptide: Transmembrane protein 225 (230 aa).

Residues 1-8 (MMHIPNRS) are Cytoplasmic-facing. Residues 9-29 (IQAANIFFSSGAILLLIVGLI) form a helical membrane-spanning segment. The Extracellular portion of the chain corresponds to 30–71 (MEDWVELIPKVRKDKTTHSPWLGCCPPFWPEESLEVVRRIMR). Residues 72-92 (MTLNISIYLNLIIGLQFSYMI) form a helical membrane-spanning segment. Over 93–99 (SQNKCVH) the chain is Cytoplasmic. Residues 100 to 120 (LLVGFLSFFAGCLLFYAIIVY) traverse the membrane as a helical segment. The Extracellular portion of the chain corresponds to 121–139 (HHKLNKGQYVYFVNYKTKW). A helical membrane pass occupies residues 140 to 160 (IAFTVYLTIALFLTCGIFCFI). Over 161-230 (QSTNRCECMK…TQARRVTWAL (70 aa)) the chain is Cytoplasmic. The RVxF motif lies at 224–228 (RRVTW).

As to quaternary structure, interacts (via RVxF motif) with PPP1CC. Expressed in testis, epididymis and spermatozoa (at protein level). Not expressed in brain, heart, lung, liver, spleen, kidney and skeletal muscle.

It localises to the cytoplasmic vesicle. Its subcellular location is the secretory vesicle. The protein localises to the acrosome membrane. In terms of biological role, probably inhibits protein phosphatase 1 (PP1) in sperm via binding to catalytic subunit PPP1CC. The protein is Transmembrane protein 225 (Tmem225) of Mus musculus (Mouse).